We begin with the raw amino-acid sequence, 770 residues long: 1,4-alpha-glucan branching enzyme GlgB (770 aa).

Residue aspartate 433 is the Nucleophile of the active site. The active-site Proton donor is the glutamate 486.

Belongs to the glycosyl hydrolase 13 family. GlgB subfamily. As to quaternary structure, monomer.

The enzyme catalyses Transfers a segment of a (1-&gt;4)-alpha-D-glucan chain to a primary hydroxy group in a similar glucan chain.. It functions in the pathway glycan biosynthesis; glycogen biosynthesis. Its function is as follows. Catalyzes the formation of the alpha-1,6-glucosidic linkages in glycogen by scission of a 1,4-alpha-linked oligosaccharide from growing alpha-1,4-glucan chains and the subsequent attachment of the oligosaccharide to the alpha-1,6 position. The sequence is that of 1,4-alpha-glucan branching enzyme GlgB (glgB) from Synechocystis sp. (strain ATCC 27184 / PCC 6803 / Kazusa).